We begin with the raw amino-acid sequence, 73 residues long: Large ribosomal subunit protein uL29 (73 aa).

This sequence belongs to the universal ribosomal protein uL29 family.

In Synechococcus sp. (strain JA-2-3B'a(2-13)) (Cyanobacteria bacterium Yellowstone B-Prime), this protein is Large ribosomal subunit protein uL29.